Reading from the N-terminus, the 333-residue chain is Cap-specific mRNA (nucleoside-2'-O-)-methyltransferase (333 aa).

Tyr22 lines the mRNA pocket. The S-adenosyl-L-methionine site is built by Gln39, Tyr66, Gly68, Gly72, Asp95, Arg97, Val116, and Asp138. Residues 169–249 (PVASSLKWRC…NKIVRNKVVV (81 aa)) are binding to NPH-I. A binding to Rap94 region spans residues 169-333 (PVASSLKWRC…NSKRSVRSNK (165 aa)). The For methyltransferase activity role is filled by Lys175. Residues 177–180 (RCPF), Asp182, 205–207 (SAE), and Glu233 contribute to the mRNA site. The segment at 305-333 (SHEPIQRKISSKNSMSKNRNSKRSVRSNK) is disordered. Residues 311–322 (RKISSKNSMSKN) show a composition bias toward low complexity. Positions 323–333 (RNSKRSVRSNK) are enriched in basic residues.

This sequence belongs to the class I-like SAM-binding methyltransferase superfamily. Poxvirus/kinetoplastid 2'-O-MTase family. As to quaternary structure, interacts with poly(A) polymerase catalytic subunit OPG063. Interacts with OPG109 and OPG123; these interactions might help linking transcription to capping and polyadenylation.

The protein localises to the virion. It carries out the reaction a 5'-end (N(7)-methyl 5'-triphosphoguanosine)-ribonucleoside in mRNA + S-adenosyl-L-methionine = a 5'-end (N(7)-methyl 5'-triphosphoguanosine)-(2'-O-methyl-ribonucleoside) in mRNA + S-adenosyl-L-homocysteine + H(+). Displays methyltransferase, positive regulation of the poly(A) polymerase and transcription elongation activities. Involved in the modification of both mRNA ends and in intermediate and late gene positive transcription elongation. At the mRNAs 5' end, methylates the ribose 2' OH group of the first transcribed nucleotide, thereby producing a 2'-O-methylpurine cap. At the 3' end, functions as a processivity factor which stimulates the activity of the viral poly(A) polymerase OPG063 that creates mRNA's poly(A) tail. In the presence of OPG102, OPG063 does not dissociate from the RNA allowing tail elongation to around 250 adenylates. This is Cap-specific mRNA (nucleoside-2'-O-)-methyltransferase (OPG102) from Vaccinia virus (strain Western Reserve) (VACV).